Consider the following 254-residue polypeptide: Imidazole glycerol phosphate synthase subunit HisF (254 aa).

Residues Asp-12 and Asp-131 contribute to the active site.

It belongs to the HisA/HisF family. In terms of assembly, heterodimer of HisH and HisF.

Its subcellular location is the cytoplasm. The catalysed reaction is 5-[(5-phospho-1-deoxy-D-ribulos-1-ylimino)methylamino]-1-(5-phospho-beta-D-ribosyl)imidazole-4-carboxamide + L-glutamine = D-erythro-1-(imidazol-4-yl)glycerol 3-phosphate + 5-amino-1-(5-phospho-beta-D-ribosyl)imidazole-4-carboxamide + L-glutamate + H(+). The protein operates within amino-acid biosynthesis; L-histidine biosynthesis; L-histidine from 5-phospho-alpha-D-ribose 1-diphosphate: step 5/9. Functionally, IGPS catalyzes the conversion of PRFAR and glutamine to IGP, AICAR and glutamate. The HisF subunit catalyzes the cyclization activity that produces IGP and AICAR from PRFAR using the ammonia provided by the HisH subunit. The sequence is that of Imidazole glycerol phosphate synthase subunit HisF from Corynebacterium aurimucosum (strain ATCC 700975 / DSM 44827 / CIP 107346 / CN-1) (Corynebacterium nigricans).